A 411-amino-acid polypeptide reads, in one-letter code: Glutamyl-tRNA reductase (411 aa).

Substrate is bound by residues 48 to 51 (TCNR), Ser-106, 111 to 113 (EDQ), and Gln-117. The active-site Nucleophile is the Cys-49. Residue 186-191 (GAGDMG) participates in NADP(+) binding.

The protein belongs to the glutamyl-tRNA reductase family. As to quaternary structure, homodimer.

The enzyme catalyses (S)-4-amino-5-oxopentanoate + tRNA(Glu) + NADP(+) = L-glutamyl-tRNA(Glu) + NADPH + H(+). Its pathway is porphyrin-containing compound metabolism; protoporphyrin-IX biosynthesis; 5-aminolevulinate from L-glutamyl-tRNA(Glu): step 1/2. Catalyzes the NADPH-dependent reduction of glutamyl-tRNA(Glu) to glutamate 1-semialdehyde (GSA). This Clostridium novyi (strain NT) protein is Glutamyl-tRNA reductase.